A 427-amino-acid chain; its full sequence is Protein TIFY 6a (427 aa).

Positions M1–Y25 are enriched in basic and acidic residues. Residues M1–S33 are disordered. A Tify domain is found at Q196–R231. 2 stretches are compositionally biased toward polar residues: residues L293 to S303 and P317 to I327. Residues L293–I327 are disordered. The Jas motif lies at P343–Y367. A Nuclear localization signal motif is present at residues A345–R352. Residues R360–I427 form a disordered region. Composition is skewed to polar residues over residues S369–E402 and R411–I427.

Belongs to the TIFY/JAZ family. Post-translationally, ubiquitinated.

It localises to the nucleus. Repressor of jasmonate responses. This chain is Protein TIFY 6a, found in Oryza sativa subsp. indica (Rice).